The sequence spans 348 residues: RNA 3'-terminal phosphate cyclase (348 aa).

Residues Gln107 and 290 to 294 (HLADQ) contribute to the ATP site. Catalysis depends on His316, which acts as the Tele-AMP-histidine intermediate.

This sequence belongs to the RNA 3'-terminal cyclase family. Type 1 subfamily.

It is found in the cytoplasm. The catalysed reaction is a 3'-end 3'-phospho-ribonucleotide-RNA + ATP = a 3'-end 2',3'-cyclophospho-ribonucleotide-RNA + AMP + diphosphate. Functionally, catalyzes the conversion of 3'-phosphate to a 2',3'-cyclic phosphodiester at the end of RNA. The mechanism of action of the enzyme occurs in 3 steps: (A) adenylation of the enzyme by ATP; (B) transfer of adenylate to an RNA-N3'P to produce RNA-N3'PP5'A; (C) and attack of the adjacent 2'-hydroxyl on the 3'-phosphorus in the diester linkage to produce the cyclic end product. The biological role of this enzyme is unknown but it is likely to function in some aspects of cellular RNA processing. This is RNA 3'-terminal phosphate cyclase (rtcA) from Nostoc sp. (strain PCC 7120 / SAG 25.82 / UTEX 2576).